A 522-amino-acid chain; its full sequence is Ribonuclease Y (522 aa).

The chain crosses the membrane as a helical span at residues 3–23; it reads ELIMYILATAVVSIGVGIVAG. One can recognise a KH domain in the interval 212–272; the sequence is CVSIFNIESD…VRREVARLSL (61 aa). In terms of domain architecture, HD spans 338–431; the sequence is LLQHSREVAK…VQVCDAISGA (94 aa).

It belongs to the RNase Y family.

It localises to the cell membrane. In terms of biological role, endoribonuclease that initiates mRNA decay. This Cytophaga hutchinsonii (strain ATCC 33406 / DSM 1761 / CIP 103989 / NBRC 15051 / NCIMB 9469 / D465) protein is Ribonuclease Y.